The chain runs to 179 residues: uncharacterized protein (179 aa).

Low complexity predominate over residues 26–39 (AAKLAAATTPTHTA). The interval 26–179 (AAKLAAATTP…RPRRNTLRHM (154 aa)) is disordered. The span at 150–165 (RQSVTQSTAARQTQPH) shows a compositional bias: polar residues. Residues 167-179 (GRPRPRRNTLRHM) show a composition bias toward basic residues.

This is an uncharacterized protein from Equus caballus (Horse).